Consider the following 398-residue polypeptide: MNKLVVKCGNFAVLVDLQVLPQGTSKDTSWFSDHEKEEVCTLVRDTLDSRVKEYLDSRRQPGQLKRKEYTQASPLILKGNRLRIAAYFIKRWVKLRCVVKRQYRELHVFPDRFVVCASQLEPASSVWVTEAAATLKESCSSGTSEYFAQPKGIEMTNLLTTPAQAVLKNIVRKTKITKDISDEAERDSRMSPSLGLADTGKADANNIQKALSKAQPEEKRAEEPNDYINTENSLGLPVPEVENDVNHRQPSEASSQQKPQCAELKTQDLSKHLSRLSDSAKQTQSLRASVMQQKRRRHSSEGKERCKKSCLTSDTFIQQGMQRNEAQVKDLEHVPLASQTDPVRHVSADRGDTLPSKPAAIISVASKQQQGALSLFSNIHTEQSVKAVLAPLLNKDLP.

The disordered stretch occupies residues 181-306 (SDEAERDSRM…RHSSEGKERC (126 aa)). Positions 276–292 (LSDSAKQTQSLRASVMQ) are enriched in polar residues.

This sequence belongs to the SLX4IP family.

The chain is Protein SLX4IP (slx4ip) from Xenopus tropicalis (Western clawed frog).